We begin with the raw amino-acid sequence, 241 residues long: Guanosine phosphorylase (241 aa).

This sequence belongs to the PNP/UDP phosphorylase family.

The enzyme catalyses guanosine + phosphate = alpha-D-ribose 1-phosphate + guanine. It carries out the reaction a purine D-ribonucleoside + phosphate = a purine nucleobase + alpha-D-ribose 1-phosphate. It catalyses the reaction inosine + phosphate = alpha-D-ribose 1-phosphate + hypoxanthine. The catalysed reaction is adenosine + phosphate = alpha-D-ribose 1-phosphate + adenine. Its activity is regulated as follows. Activity is higher at low KCl concentrations. In terms of biological role, phosphorylase involved in the non-carboxylating pentose bisphosphate pathway, a nucleoside degradation pathway present in some halophilic archaea. Catalyzes the phosphorolytic cleavage of guanosine to guanine and ribose-1-phosphate (R1P). Exhibits the highest activity toward guanosine, but also shows lower activity against inosine and adenosine. The protein is Guanosine phosphorylase of Halorubrum lacusprofundi (strain ATCC 49239 / DSM 5036 / JCM 8891 / ACAM 34).